An 880-amino-acid chain; its full sequence is Alanine--tRNA ligase (880 aa).

Residues histidine 558, histidine 562, cysteine 663, and histidine 667 each contribute to the Zn(2+) site.

The protein belongs to the class-II aminoacyl-tRNA synthetase family. Zn(2+) serves as cofactor.

It localises to the cytoplasm. The enzyme catalyses tRNA(Ala) + L-alanine + ATP = L-alanyl-tRNA(Ala) + AMP + diphosphate. Catalyzes the attachment of alanine to tRNA(Ala) in a two-step reaction: alanine is first activated by ATP to form Ala-AMP and then transferred to the acceptor end of tRNA(Ala). Also edits incorrectly charged Ser-tRNA(Ala) and Gly-tRNA(Ala) via its editing domain. In Mycoplasmopsis agalactiae (strain NCTC 10123 / CIP 59.7 / PG2) (Mycoplasma agalactiae), this protein is Alanine--tRNA ligase.